Consider the following 83-residue polypeptide: Neurotoxin 3FTx-RI (83 aa).

The signal sequence occupies residues 1–21; that stretch reads MKTLLLTLVVLTIVCLDLGHT. Cystine bridges form between Cys-24/Cys-45, Cys-38/Cys-62, Cys-64/Cys-75, and Cys-76/Cys-81.

This sequence belongs to the three-finger toxin family. Short-chain subfamily. Type I alpha-neurotoxin sub-subfamily. Expressed by the venom gland.

It is found in the secreted. Functionally, binds to muscle nicotinic acetylcholine receptor (nAChR) and inhibit acetylcholine from binding to the receptor, thereby impairing neuromuscular transmission. In Bungarus fasciatus (Banded krait), this protein is Neurotoxin 3FTx-RI.